Reading from the N-terminus, the 138-residue chain is Basic phospholipase A2 trimucrotoxin (138 aa).

A signal peptide spans 1-16 (MRTLWIVAVLLLGVEG). Disulfide bonds link Cys42-Cys131, Cys44-Cys60, Cys59-Cys111, Cys65-Cys138, Cys66-Cys104, Cys73-Cys97, and Cys91-Cys102. The Ca(2+) site is built by Tyr43, Gly45, and Gly47. The active site involves His63. Asp64 contacts Ca(2+). Asp105 is a catalytic residue.

The protein belongs to the phospholipase A2 family. Group II subfamily. D49 sub-subfamily. As to quaternary structure, homodimer. Requires Ca(2+) as cofactor. In terms of tissue distribution, expressed by the venom gland.

It is found in the secreted. The catalysed reaction is a 1,2-diacyl-sn-glycero-3-phosphocholine + H2O = a 1-acyl-sn-glycero-3-phosphocholine + a fatty acid + H(+). Functionally, snake venom phospholipase A2 (PLA2) that displays edema-inducing activities, as well as presynaptic neurotoxicity and low myotoxicity. PLA2 catalyzes the calcium-dependent hydrolysis of the 2-acyl groups in 3-sn-phosphoglycerides. The protein is Basic phospholipase A2 trimucrotoxin of Protobothrops mucrosquamatus (Taiwan habu).